We begin with the raw amino-acid sequence, 358 residues long: 3'(2'),5'-bisphosphate nucleotidase (358 aa).

The Proton acceptor role is filled by D52. Residues E78, D140, I142, and D143 each contribute to the Mg(2+) site. Residue T145 is the Proton acceptor of the active site. Adenosine 3',5'-bisphosphate is bound by residues T145, H239, S263, K266, R280, and D292. AMP is bound by residues H239, S263, K266, R280, and D292. Residue D292 coordinates Mg(2+).

The protein belongs to the inositol monophosphatase superfamily. The cofactor is Mg(2+). In terms of tissue distribution, is constitutively transcribed in both roots and shoots.

It carries out the reaction 3'-phosphoadenylyl sulfate + H2O = adenosine 5'-phosphosulfate + phosphate. It catalyses the reaction adenosine 3',5'-bisphosphate + H2O = AMP + phosphate. The enzyme catalyses adenosine 2',5'-bisphosphate + H2O = AMP + phosphate. Inhibited by Ca(2+), Li(+), and Na(+) and activated by K(+). In terms of biological role, phosphatase that converts adenosine 3'-phosphate 5'-phosphosulfate (PAPS) to adenosine 5'-phosphosulfate (APS) and 3'(2')-phosphoadenosine 5'-phosphate (PAP) to AMP. May regulate the flux of sulfur in the sulfur-activation pathway by converting PAPS to APS. Shows no activity on myo-inositol 1-phosphate, beta-glycerol phosphate, NADPH, NADP and 5'-AMP. This chain is 3'(2'),5'-bisphosphate nucleotidase, found in Oryza sativa (Rice).